The primary structure comprises 1495 residues: VPS10 homolog 2 (1495 aa).

A signal peptide spans M1–A21. The Lumenal segment spans residues E23–T1369. BNR repeat units follow at residues I58–K67 and Y101–R111. Residue N148 is glycosylated (N-linked (GlcNAc...) asparagine). 3 BNR repeats span residues L229–K238, V394–S403, and F465–R475. N479 carries an N-linked (GlcNAc...) asparagine glycan. BNR repeat units lie at residues Y511 to W520 and Y740 to K750. Residue N769 is glycosylated (N-linked (GlcNAc...) asparagine). One copy of the BNR 8 repeat lies at Y837 to T847. An N-linked (GlcNAc...) asparagine glycan is attached at N986. BNR repeat units lie at residues F1119–T1129 and Y1161–K1170. Residue N1279 is glycosylated (N-linked (GlcNAc...) asparagine). A helical transmembrane segment spans residues G1370–V1390. The Cytoplasmic segment spans residues Y1391 to I1495.

Belongs to the VPS10-related sortilin family.

The protein localises to the golgi apparatus. It localises to the trans-Golgi network membrane. In terms of biological role, functions as a sorting receptor in the Golgi compartment required for the intracellular sorting and delivery of soluble vacuolar proteins, like carboxypeptidase Y (CPY) and proteinase A. The chain is VPS10 homolog 2 (VTH2) from Saccharomyces cerevisiae (strain Lalvin EC1118 / Prise de mousse) (Baker's yeast).